The chain runs to 301 residues: Acetylglutamate kinase (301 aa).

Substrate contacts are provided by residues 72 to 73 (GG), Arg94, and Asn199.

The protein belongs to the acetylglutamate kinase family. ArgB subfamily.

It localises to the cytoplasm. The enzyme catalyses N-acetyl-L-glutamate + ATP = N-acetyl-L-glutamyl 5-phosphate + ADP. It participates in amino-acid biosynthesis; L-arginine biosynthesis; N(2)-acetyl-L-ornithine from L-glutamate: step 2/4. Catalyzes the ATP-dependent phosphorylation of N-acetyl-L-glutamate. This chain is Acetylglutamate kinase, found in Azorhizobium caulinodans (strain ATCC 43989 / DSM 5975 / JCM 20966 / LMG 6465 / NBRC 14845 / NCIMB 13405 / ORS 571).